A 299-amino-acid polypeptide reads, in one-letter code: Light-independent protochlorophyllide reductase iron-sulfur ATP-binding protein (299 aa).

Residues 1 to 23 form a disordered region; sequence MSPLDRTPPSLRGQDGEGSVQVH. ATP is bound by residues 43 to 48 and K72; that span reads GIGKST. Residue S47 coordinates Mg(2+). [4Fe-4S] cluster-binding residues include C128 and C162. Residues 213 to 214 and 237 to 239 contribute to the ATP site; these read NR and PDL.

This sequence belongs to the NifH/BchL/ChlL family. As to quaternary structure, homodimer. Protochlorophyllide reductase is composed of three subunits; BchL, BchN and BchB. Requires [4Fe-4S] cluster as cofactor.

The catalysed reaction is chlorophyllide a + oxidized 2[4Fe-4S]-[ferredoxin] + 2 ADP + 2 phosphate = protochlorophyllide a + reduced 2[4Fe-4S]-[ferredoxin] + 2 ATP + 2 H2O. The protein operates within porphyrin-containing compound metabolism; bacteriochlorophyll biosynthesis (light-independent). Its function is as follows. Component of the dark-operative protochlorophyllide reductase (DPOR) that uses Mg-ATP and reduced ferredoxin to reduce ring D of protochlorophyllide (Pchlide) to form chlorophyllide a (Chlide). This reaction is light-independent. The L component serves as a unique electron donor to the NB-component of the complex, and binds Mg-ATP. The polypeptide is Light-independent protochlorophyllide reductase iron-sulfur ATP-binding protein (Roseobacter denitrificans (strain ATCC 33942 / OCh 114) (Erythrobacter sp. (strain OCh 114))).